A 159-amino-acid polypeptide reads, in one-letter code: MGRGKIEIKRIDNATSRQVTFSKRRSGLFKKARELSILCDAEVGLLVFSSTSRLYDFASSSMKSIIERYNETKEDPHQTMNASSEAKLWQQEAASLRQQLHNLQEYHRQLLGQQLSGLDVEDLQNLESKLEMSLKNIRLRKDNVMMDQIQELSRKVVTT.

The MADS-box domain occupies 1–61 (MGRGKIEIKR…SRLYDFASSS (61 aa)). The K-box domain occupies 86 to 159 (AKLWQQEAAS…QELSRKVVTT (74 aa)).

As to expression, expressed in seedling roots and developing seeds.

It is found in the nucleus. In terms of biological role, probable transcription factor. This is MADS-box transcription factor 23 (MADS23) from Oryza sativa subsp. japonica (Rice).